Reading from the N-terminus, the 166-residue chain is Transcription elongation factor GreA (166 aa).

The protein belongs to the GreA/GreB family.

Functionally, necessary for efficient RNA polymerase transcription elongation past template-encoded arresting sites. The arresting sites in DNA have the property of trapping a certain fraction of elongating RNA polymerases that pass through, resulting in locked ternary complexes. Cleavage of the nascent transcript by cleavage factors such as GreA or GreB allows the resumption of elongation from the new 3'terminus. GreA releases sequences of 2 to 3 nucleotides. The protein is Transcription elongation factor GreA of Anaeromyxobacter sp. (strain K).